A 173-amino-acid polypeptide reads, in one-letter code: dCTP deaminase, dUMP-forming (173 aa).

Residues 93–98, aspartate 111, 119–121, glutamine 138, and tyrosine 151 each bind dCTP; these read RSSTGR and TLE. The Proton donor/acceptor role is filled by glutamate 121.

The protein belongs to the dCTP deaminase family. Homotrimer.

The catalysed reaction is dCTP + 2 H2O = dUMP + NH4(+) + diphosphate. It functions in the pathway pyrimidine metabolism; dUMP biosynthesis; dUMP from dCTP: step 1/1. Bifunctional enzyme that catalyzes both the deamination of dCTP to dUTP and the hydrolysis of dUTP to dUMP without releasing the toxic dUTP intermediate. This Clostridium botulinum (strain Eklund 17B / Type B) protein is dCTP deaminase, dUMP-forming.